A 1872-amino-acid polypeptide reads, in one-letter code: Ral GTPase-activating protein subunit alpha-2 (1872 aa).

Phosphoserine is present on residues serine 373, serine 376, and serine 379. A compositionally biased stretch (basic and acidic residues) spans 446 to 469; the sequence is DKKDVAEEDADKLGLSETDSKEVS. Residues 446–481 are disordered; sequence DKKDVAEEDADKLGLSETDSKEVSSESSGHKRSSSW. A phosphoserine mark is found at serine 486 and serine 696. Disordered stretches follow at residues 711–730 and 758–849; these read FRSA…NTVR and QPVP…TGSD. Threonine 715 carries the post-translational modification Phosphothreonine; by PKB. The span at 775–795 shows a compositional bias: polar residues; the sequence is SDSSQGQKVENSQNLSSSEPK. A compositionally biased stretch (basic and acidic residues) spans 796 to 810; that stretch reads SVQESKGHVTHEHEG. Serine 819 and serine 820 each carry phosphoserine. The span at 824 to 843 shows a compositional bias: basic and acidic residues; it reads LDLKEESQQTHGRCRERQKS. Position 1592 is a phosphoserine (serine 1592). In terms of domain architecture, Rap-GAP spans 1634 to 1842; sequence LKNLDSRQCR…EERALYLEAI (209 aa).

Component of the heterodimeric RalGAP2 complex with RALGAPB. Heterodimerization is required for activity. In terms of tissue distribution, highly expressed in lung, liver, testis and thymus with lower levels in brain and heart (at protein level).

It is found in the cytoplasm. In terms of biological role, catalytic subunit of the heterodimeric RalGAP2 complex which acts as a GTPase activator for the Ras-like small GTPases RALA and RALB. The sequence is that of Ral GTPase-activating protein subunit alpha-2 from Rattus norvegicus (Rat).